Here is an 83-residue protein sequence, read N- to C-terminus: Cytochrome c oxidase subunit 7A2, mitochondrial (83 aa).

A mitochondrion-targeting transit peptide spans 1–23 (MLRNLLALRQIAKRTISTSSRRQ). Residues 24 to 48 (FENKVPEKQKLFQEDNGIPVHLKGG) are Mitochondrial matrix-facing. N6-acetyllysine is present on lysine 33. The helical transmembrane segment at 49 to 77 (IADALLYRATLILTVGGTAYAMYELAVAS) threads the bilayer. Over 78–83 (FPKKQD) the chain is Mitochondrial intermembrane.

Belongs to the cytochrome c oxidase VIIa family. As to quaternary structure, component of the cytochrome c oxidase (complex IV, CIV), a multisubunit enzyme composed of 14 subunits. The complex is composed of a catalytic core of 3 subunits MT-CO1, MT-CO2 and MT-CO3, encoded in the mitochondrial DNA, and 11 supernumerary subunits COX4I1 (or COX4I2), COX5A, COX5B, COX6A2 (or COX6A1), COX6B1 (or COX6B2), COX6C, COX7A1 (or COX7A2), COX7B, COX7C, COX8B and NDUFA4, which are encoded in the nuclear genome. The complex exists as a monomer or a dimer and forms supercomplexes (SCs) in the inner mitochondrial membrane with NADH-ubiquinone oxidoreductase (complex I, CI) and ubiquinol-cytochrome c oxidoreductase (cytochrome b-c1 complex, complex III, CIII), resulting in different assemblies (supercomplex SCI(1)III(2)IV(1) and megacomplex MCI(2)III(2)IV(2)). Interacts with PET100.

It localises to the mitochondrion inner membrane. The protein operates within energy metabolism; oxidative phosphorylation. Component of the cytochrome c oxidase, the last enzyme in the mitochondrial electron transport chain which drives oxidative phosphorylation. The respiratory chain contains 3 multisubunit complexes succinate dehydrogenase (complex II, CII), ubiquinol-cytochrome c oxidoreductase (cytochrome b-c1 complex, complex III, CIII) and cytochrome c oxidase (complex IV, CIV), that cooperate to transfer electrons derived from NADH and succinate to molecular oxygen, creating an electrochemical gradient over the inner membrane that drives transmembrane transport and the ATP synthase. Cytochrome c oxidase is the component of the respiratory chain that catalyzes the reduction of oxygen to water. Electrons originating from reduced cytochrome c in the intermembrane space (IMS) are transferred via the dinuclear copper A center (CU(A)) of subunit 2 and heme A of subunit 1 to the active site in subunit 1, a binuclear center (BNC) formed by heme A3 and copper B (CU(B)). The BNC reduces molecular oxygen to 2 water molecules using 4 electrons from cytochrome c in the IMS and 4 protons from the mitochondrial matrix. The protein is Cytochrome c oxidase subunit 7A2, mitochondrial (COX7A2) of Bos taurus (Bovine).